The sequence spans 364 residues: 3'(2'),5'-bisphosphate nucleotidase 1 (364 aa).

Residue aspartate 54 is the Proton acceptor of the active site. Residues glutamate 77, aspartate 141, isoleucine 143, and aspartate 144 each contribute to the Mg(2+) site. Threonine 146 acts as the Proton acceptor in catalysis. Adenosine 3',5'-bisphosphate-binding residues include threonine 146, histidine 243, serine 272, lysine 275, arginine 289, and aspartate 302. Residues histidine 243, serine 272, lysine 275, arginine 289, and aspartate 302 each coordinate AMP. Aspartate 302 lines the Mg(2+) pocket.

Belongs to the inositol monophosphatase superfamily. The cofactor is Mg(2+).

It catalyses the reaction 3'-phosphoadenylyl sulfate + H2O = adenosine 5'-phosphosulfate + phosphate. The catalysed reaction is adenosine 3',5'-bisphosphate + H2O = AMP + phosphate. It carries out the reaction adenosine 2',5'-bisphosphate + H2O = AMP + phosphate. Its function is as follows. Phosphatase that converts adenosine 3'-phosphate 5'-phosphosulfate (PAPS) to adenosine 5'-phosphosulfate (APS) and 3'(2')-phosphoadenosine 5'-phosphate (PAP) to AMP. Regulates the flux of sulfur in the sulfur-activation pathway by converting PAPS to APS. Involved in salt tolerance. The protein is 3'(2'),5'-bisphosphate nucleotidase 1 (HAL21) of Candida albicans (strain SC5314 / ATCC MYA-2876) (Yeast).